The primary structure comprises 587 residues: Dynein axonemal intermediate chain 2 (587 aa).

WD repeat units lie at residues 214 to 254 (RPAS…NPVE), 261 to 302 (SHRD…EPTE), 362 to 401 (GHHGPIYSIQRNPFFPKNFLTVGDWTARIWSEDCRESSIM), and 405 to 445 (YHTS…NNPS). Disordered stretches follow at residues 519–542 (LKERSKAEPGEEVKDEKPAEDMKE) and 562–587 (KEQQEIKQSEDEHQEKEVSEEKIVHE).

It belongs to the dynein intermediate chain family. As to quaternary structure, consists of at least two heavy chains and a number of intermediate and light chains. Interacts with DNAAF2. Interacts with DNAAF6/PIH1D3. Interacts with HEATR2; probably involved in outer arm dynein assembly. Interacts with C16ORF71/DAAP1.

The protein localises to the cytoplasm. The protein resides in the cytoskeleton. It is found in the cilium axoneme. It localises to the dynein axonemal particle. In terms of biological role, part of the dynein complex of multiciliated cell cilia. This is Dynein axonemal intermediate chain 2 (dnai2) from Xenopus laevis (African clawed frog).